The chain runs to 83 residues: Exodeoxyribonuclease 7 small subunit (83 aa).

It belongs to the XseB family. As to quaternary structure, heterooligomer composed of large and small subunits.

The protein localises to the cytoplasm. The catalysed reaction is Exonucleolytic cleavage in either 5'- to 3'- or 3'- to 5'-direction to yield nucleoside 5'-phosphates.. In terms of biological role, bidirectionally degrades single-stranded DNA into large acid-insoluble oligonucleotides, which are then degraded further into small acid-soluble oligonucleotides. This chain is Exodeoxyribonuclease 7 small subunit, found in Nitrobacter hamburgensis (strain DSM 10229 / NCIMB 13809 / X14).